A 415-amino-acid polypeptide reads, in one-letter code: Serine hydroxymethyltransferase (415 aa).

Residues L117 and 121 to 123 contribute to the (6S)-5,6,7,8-tetrahydrofolate site; that span reads GHL. K226 is modified (N6-(pyridoxal phosphate)lysine). E241 is a binding site for (6S)-5,6,7,8-tetrahydrofolate.

The protein belongs to the SHMT family. As to quaternary structure, homodimer. Pyridoxal 5'-phosphate is required as a cofactor.

It localises to the cytoplasm. It carries out the reaction (6R)-5,10-methylene-5,6,7,8-tetrahydrofolate + glycine + H2O = (6S)-5,6,7,8-tetrahydrofolate + L-serine. It functions in the pathway one-carbon metabolism; tetrahydrofolate interconversion. It participates in amino-acid biosynthesis; glycine biosynthesis; glycine from L-serine: step 1/1. Functionally, catalyzes the reversible interconversion of serine and glycine with tetrahydrofolate (THF) serving as the one-carbon carrier. This reaction serves as the major source of one-carbon groups required for the biosynthesis of purines, thymidylate, methionine, and other important biomolecules. Also exhibits THF-independent aldolase activity toward beta-hydroxyamino acids, producing glycine and aldehydes, via a retro-aldol mechanism. The polypeptide is Serine hydroxymethyltransferase (Bacillus velezensis (strain DSM 23117 / BGSC 10A6 / LMG 26770 / FZB42) (Bacillus amyloliquefaciens subsp. plantarum)).